Here is a 490-residue protein sequence, read N- to C-terminus: Cruciferin BnC1 (490 aa).

An N-terminal signal peptide occupies residues 1 to 23 (MARLSSLLSFSLALLIFLHGSTA). 2 cysteine pairs are disulfide-bonded: C30/C63 and C106/C307. Cupin type-1 domains lie at 35–263 (LNAL…RTAQ) and 313–462 (DNLD…EEAR). Residue T109 is modified to Phosphothreonine. The tract at residues 113 to 164 (SSVFQPSGGSPSGEGQGQGQQGQGQGHQGQGQGQQGQQGQQGQQSQGQGFRD) is disordered. The span at 122 to 148 (SPSGEGQGQGQQGQGQGHQGQGQGQQG) shows a compositional bias: gly residues. Residues 149–161 (QQGQQGQQSQGQG) are compositionally biased toward low complexity. A Phosphotyrosine modification is found at Y330. Position 332 is a phosphoserine (S332). At T426 the chain carries Phosphothreonine.

Belongs to the 11S seed storage protein (globulins) family. As to quaternary structure, hexamer; each subunit is composed of an acidic and a basic chain derived from a single precursor and linked by a disulfide bond.

In terms of biological role, this is a seed storage protein. The chain is Cruciferin BnC1 (BnC1) from Brassica napus (Rape).